A 193-amino-acid chain; its full sequence is Peptidyl-tRNA hydrolase (193 aa).

Position 17 (His-17) interacts with tRNA. The active-site Proton acceptor is His-22. Residues Phe-68, Asn-70, and Asn-116 each contribute to the tRNA site.

It belongs to the PTH family. As to quaternary structure, monomer.

It is found in the cytoplasm. It carries out the reaction an N-acyl-L-alpha-aminoacyl-tRNA + H2O = an N-acyl-L-amino acid + a tRNA + H(+). Functionally, hydrolyzes ribosome-free peptidyl-tRNAs (with 1 or more amino acids incorporated), which drop off the ribosome during protein synthesis, or as a result of ribosome stalling. Its function is as follows. Catalyzes the release of premature peptidyl moieties from peptidyl-tRNA molecules trapped in stalled 50S ribosomal subunits, and thus maintains levels of free tRNAs and 50S ribosomes. The sequence is that of Peptidyl-tRNA hydrolase from Xanthomonas axonopodis pv. citri (strain 306).